A 946-amino-acid chain; its full sequence is Bifunctional glutamine synthetase adenylyltransferase/adenylyl-removing enzyme (946 aa).

The segment at 1 to 440 (MKPLSSPLQQ…VFNELIGDDE (440 aa)) is adenylyl removase. Residues 449-946 (SEQWRELWQD…ASWQKWLVEE (498 aa)) are adenylyl transferase.

Belongs to the GlnE family. The cofactor is Mg(2+).

The catalysed reaction is [glutamine synthetase]-O(4)-(5'-adenylyl)-L-tyrosine + phosphate = [glutamine synthetase]-L-tyrosine + ADP. The enzyme catalyses [glutamine synthetase]-L-tyrosine + ATP = [glutamine synthetase]-O(4)-(5'-adenylyl)-L-tyrosine + diphosphate. Involved in the regulation of glutamine synthetase GlnA, a key enzyme in the process to assimilate ammonia. When cellular nitrogen levels are high, the C-terminal adenylyl transferase (AT) inactivates GlnA by covalent transfer of an adenylyl group from ATP to specific tyrosine residue of GlnA, thus reducing its activity. Conversely, when nitrogen levels are low, the N-terminal adenylyl removase (AR) activates GlnA by removing the adenylyl group by phosphorolysis, increasing its activity. The regulatory region of GlnE binds the signal transduction protein PII (GlnB) which indicates the nitrogen status of the cell. This chain is Bifunctional glutamine synthetase adenylyltransferase/adenylyl-removing enzyme, found in Escherichia coli O9:H4 (strain HS).